Reading from the N-terminus, the 426-residue chain is MIRIDLKQDDMPDHWYNILPDLPEELPTPRDETGEAFETLKKAVPTKVLEYEFSGERYPKIPGEIYEKYMQVGRPTPIIRAKNLEEFLGGNIKIYLKMESYTYSGSHKINSALAHVFFAKQDNAKFVSTETGAGQWGSAVALASALFGVDSHIFMVRTSFYAKPYRKYMMYMYGAHPHPSPSEFTEYGKEVLKKNPDTPGSLGLAISEAIHYALDNGGKYIAGSVINSDILFKTIAGMEAKKQMEMAGEDPDYVVGVVGGGSNYAALAFPFLADELQSGKVKRTYIASGSKEVPKMTEGEYRYDYPDTGKVLPLLKMYTIGYDFIPPAVYAGGLRYHAVAPTLSLLMNKGIVQARDYDQEEAFKWARIFSEKEGYIPAPETSHALPILKEIADSNRGEREKKTVLVSFSGHGLLDLGNYAEAMHFE.

Position 108 is an N6-(pyridoxal phosphate)lysine (lysine 108).

It belongs to the TrpB family. Tetramer of two alpha and two beta chains. It depends on pyridoxal 5'-phosphate as a cofactor.

The enzyme catalyses (1S,2R)-1-C-(indol-3-yl)glycerol 3-phosphate + L-serine = D-glyceraldehyde 3-phosphate + L-tryptophan + H2O. Its pathway is amino-acid biosynthesis; L-tryptophan biosynthesis; L-tryptophan from chorismate: step 5/5. In terms of biological role, the beta subunit is responsible for the synthesis of L-tryptophan from indole and L-serine. This Thermoplasma volcanium (strain ATCC 51530 / DSM 4299 / JCM 9571 / NBRC 15438 / GSS1) protein is Tryptophan synthase beta chain (trpB).